Here is a 248-residue protein sequence, read N- to C-terminus: (2S)-[(R)-hydroxy(phenyl)methyl]succinyl-CoA dehydrogenase subunit BbsD (248 aa).

NAD(+) contacts are provided by Ser15, Asp36, Asp62, Ile63, Asn89, Tyr153, and Lys157. Tyr153 serves as the catalytic Proton acceptor.

The protein belongs to the short-chain dehydrogenases/reductases (SDR) family. In terms of assembly, heterotetramer composed of 2 inactive BbsC subunits and 2 active BbsD subunits.

It catalyses the reaction (2S)-[(R)-hydroxy(phenyl)methyl]succinyl-CoA + NAD(+) = (S)-2-benzoylsuccinyl-CoA + NADH + H(+). It participates in xenobiotic degradation; toluene degradation. With respect to regulation, activity is probably regulated by the inactive BbsC subunit. Functionally, involved in an anaerobic toluene degradation pathway. Active subunit that catalyzes the oxidation of 2-(alpha-hydroxybenzyl)succinyl-CoA to 2-benzoylsuccinyl-CoA. In vitro, can catalyze the NADH-dependent reduction of the artificial substrates 2,2-dichloroacetophene and 2,4'-dichloroacetophenone. This Thauera aromatica protein is (2S)-[(R)-hydroxy(phenyl)methyl]succinyl-CoA dehydrogenase subunit BbsD.